The following is a 100-amino-acid chain: NADH-quinone oxidoreductase subunit K (100 aa).

The next 3 helical transmembrane spans lie at 4-24 (LSYS…GIMI), 29-49 (LFLL…FVIV), and 60-80 (VMYI…LALL).

The protein belongs to the complex I subunit 4L family. NDH-1 is composed of 14 different subunits. Subunits NuoA, H, J, K, L, M, N constitute the membrane sector of the complex.

Its subcellular location is the cell membrane. It carries out the reaction a quinone + NADH + 5 H(+)(in) = a quinol + NAD(+) + 4 H(+)(out). Its function is as follows. NDH-1 shuttles electrons from NADH, via FMN and iron-sulfur (Fe-S) centers, to quinones in the respiratory chain. The immediate electron acceptor for the enzyme in this species is believed to be ubiquinone. Couples the redox reaction to proton translocation (for every two electrons transferred, four hydrogen ions are translocated across the cytoplasmic membrane), and thus conserves the redox energy in a proton gradient. This Baumannia cicadellinicola subsp. Homalodisca coagulata protein is NADH-quinone oxidoreductase subunit K.